The sequence spans 410 residues: Riboflavin biosynthesis protein RibBA (410 aa).

The DHBP synthase stretch occupies residues M1–R205. Residues R30–E31, D35, R144–T148, and E168 each bind D-ribulose 5-phosphate. E31 provides a ligand contact to Mg(2+). Residue H147 coordinates Mg(2+). Residues R206 to H410 form a GTP cyclohydrolase II region. R256 to Q260 is a GTP binding site. Residues C261, C272, and C274 each coordinate Zn(2+). Residues Q277, E299 to R301, and T321 each bind GTP. D333 serves as the catalytic Proton acceptor; for GTP cyclohydrolase activity. The active-site Nucleophile; for GTP cyclohydrolase activity is R335. GTP-binding residues include T356 and K361.

The protein in the N-terminal section; belongs to the DHBP synthase family. This sequence in the C-terminal section; belongs to the GTP cyclohydrolase II family. Mg(2+) serves as cofactor. Requires Mn(2+) as cofactor. The cofactor is Zn(2+).

It carries out the reaction D-ribulose 5-phosphate = (2S)-2-hydroxy-3-oxobutyl phosphate + formate + H(+). It catalyses the reaction GTP + 4 H2O = 2,5-diamino-6-hydroxy-4-(5-phosphoribosylamino)-pyrimidine + formate + 2 phosphate + 3 H(+). It functions in the pathway cofactor biosynthesis; riboflavin biosynthesis; 2-hydroxy-3-oxobutyl phosphate from D-ribulose 5-phosphate: step 1/1. Its pathway is cofactor biosynthesis; riboflavin biosynthesis; 5-amino-6-(D-ribitylamino)uracil from GTP: step 1/4. In terms of biological role, catalyzes the conversion of D-ribulose 5-phosphate to formate and 3,4-dihydroxy-2-butanone 4-phosphate. Catalyzes the conversion of GTP to 2,5-diamino-6-ribosylamino-4(3H)-pyrimidinone 5'-phosphate (DARP), formate and pyrophosphate. In Chlorobium phaeovibrioides (strain DSM 265 / 1930) (Prosthecochloris vibrioformis (strain DSM 265)), this protein is Riboflavin biosynthesis protein RibBA.